Here is a 253-residue protein sequence, read N- to C-terminus: Chemotaxis protein PomA (253 aa).

4 consecutive transmembrane segments (helical) span residues Leu-6–Ile-26, Met-28–Met-48, Phe-146–Leu-166, and Ala-180–Ile-200. Over Ala-201 to Glu-253 the chain is Cytoplasmic.

Belongs to the MotA family. As to quaternary structure, each stator complex is composed of 4 PomA and 2 PomB subunits. 2 A subunits and 1 B subunit are thought to form a single ion channel, so that each stator complex contains two channels.

It localises to the cell inner membrane. Its function is as follows. PomA and PomB comprise the stator element of the flagellar motor complex. Required for rotation of the flagellar motor. Probable transmembrane proton channel. The chain is Chemotaxis protein PomA (pomA) from Vibrio alginolyticus.